The sequence spans 129 residues: Small ribosomal subunit protein uS11 (129 aa).

Belongs to the universal ribosomal protein uS11 family. In terms of assembly, part of the 30S ribosomal subunit. Interacts with proteins S7 and S18. Binds to IF-3.

Located on the platform of the 30S subunit, it bridges several disparate RNA helices of the 16S rRNA. Forms part of the Shine-Dalgarno cleft in the 70S ribosome. In Baumannia cicadellinicola subsp. Homalodisca coagulata, this protein is Small ribosomal subunit protein uS11.